We begin with the raw amino-acid sequence, 1334 residues long: DNA-directed RNA polymerase subunit beta' (1334 aa).

Cys213, Cys284, Cys291, and Cys294 together coordinate Zn(2+). The segment covering 1299–1308 (SSRGSSRFSR) has biased composition (low complexity). The segment at 1299–1334 (SSRGSSRFSRQPISDRWSEADEEGEEDDFEEDYEEE) is disordered. Positions 1318 to 1334 (ADEEGEEDDFEEDYEEE) are enriched in acidic residues.

The protein belongs to the RNA polymerase beta' chain family. RpoC2 subfamily. As to quaternary structure, in cyanobacteria the RNAP catalytic core is composed of 2 alpha, 1 beta, 1 beta', 1 gamma and 1 omega subunit. When a sigma factor is associated with the core the holoenzyme is formed, which can initiate transcription. The cofactor is Zn(2+).

The enzyme catalyses RNA(n) + a ribonucleoside 5'-triphosphate = RNA(n+1) + diphosphate. Its function is as follows. DNA-dependent RNA polymerase catalyzes the transcription of DNA into RNA using the four ribonucleoside triphosphates as substrates. This Microcystis aeruginosa (strain NIES-843 / IAM M-2473) protein is DNA-directed RNA polymerase subunit beta'.